Reading from the N-terminus, the 207-residue chain is Octanoyltransferase (207 aa).

Positions 27-202 (GETPDELWIV…HLETRLARPQ (176 aa)) constitute a BPL/LPL catalytic domain. Substrate contacts are provided by residues 66–73 (RGGQITYH), 133–135 (SLG), and 146–148 (GLS). Cys164 acts as the Acyl-thioester intermediate in catalysis.

It belongs to the LipB family.

It is found in the cytoplasm. It catalyses the reaction octanoyl-[ACP] + L-lysyl-[protein] = N(6)-octanoyl-L-lysyl-[protein] + holo-[ACP] + H(+). It functions in the pathway protein modification; protein lipoylation via endogenous pathway; protein N(6)-(lipoyl)lysine from octanoyl-[acyl-carrier-protein]: step 1/2. Functionally, catalyzes the transfer of endogenously produced octanoic acid from octanoyl-acyl-carrier-protein onto the lipoyl domains of lipoate-dependent enzymes. Lipoyl-ACP can also act as a substrate although octanoyl-ACP is likely to be the physiological substrate. The sequence is that of Octanoyltransferase from Laribacter hongkongensis (strain HLHK9).